Here is a 343-residue protein sequence, read N- to C-terminus: Cytoplasmic tRNA 2-thiolation protein 1 (343 aa).

Belongs to the TtcA family. CTU1/NCS6/ATPBD3 subfamily.

The protein resides in the cytoplasm. It participates in tRNA modification; 5-methoxycarbonylmethyl-2-thiouridine-tRNA biosynthesis. In terms of biological role, plays a central role in 2-thiolation of mcm(5)S(2)U at tRNA wobble positions of tRNA(Lys), tRNA(Glu) and tRNA(Gln). Directly binds tRNAs and probably acts by catalyzing adenylation of tRNAs, an intermediate required for 2-thiolation. It is unclear whether it acts as a sulfurtransferase that transfers sulfur from thiocarboxylated URM1 onto the uridine of tRNAs at wobble position. The sequence is that of Cytoplasmic tRNA 2-thiolation protein 1 from Drosophila melanogaster (Fruit fly).